Reading from the N-terminus, the 249-residue chain is 23S rRNA (guanosine-2'-O-)-methyltransferase RlmB (249 aa).

3 residues coordinate S-adenosyl-L-methionine: Gly-200, Ile-220, and Leu-229.

Belongs to the class IV-like SAM-binding methyltransferase superfamily. RNA methyltransferase TrmH family. RlmB subfamily.

Its subcellular location is the cytoplasm. It carries out the reaction guanosine(2251) in 23S rRNA + S-adenosyl-L-methionine = 2'-O-methylguanosine(2251) in 23S rRNA + S-adenosyl-L-homocysteine + H(+). In terms of biological role, specifically methylates the ribose of guanosine 2251 in 23S rRNA. This Xanthomonas campestris pv. campestris (strain ATCC 33913 / DSM 3586 / NCPPB 528 / LMG 568 / P 25) protein is 23S rRNA (guanosine-2'-O-)-methyltransferase RlmB.